A 95-amino-acid polypeptide reads, in one-letter code: Aspartyl/glutamyl-tRNA(Asn/Gln) amidotransferase subunit C (95 aa).

This sequence belongs to the GatC family. As to quaternary structure, heterotrimer of A, B and C subunits.

It catalyses the reaction L-glutamyl-tRNA(Gln) + L-glutamine + ATP + H2O = L-glutaminyl-tRNA(Gln) + L-glutamate + ADP + phosphate + H(+). It carries out the reaction L-aspartyl-tRNA(Asn) + L-glutamine + ATP + H2O = L-asparaginyl-tRNA(Asn) + L-glutamate + ADP + phosphate + 2 H(+). Functionally, allows the formation of correctly charged Asn-tRNA(Asn) or Gln-tRNA(Gln) through the transamidation of misacylated Asp-tRNA(Asn) or Glu-tRNA(Gln) in organisms which lack either or both of asparaginyl-tRNA or glutaminyl-tRNA synthetases. The reaction takes place in the presence of glutamine and ATP through an activated phospho-Asp-tRNA(Asn) or phospho-Glu-tRNA(Gln). This is Aspartyl/glutamyl-tRNA(Asn/Gln) amidotransferase subunit C from Halorhodospira halophila (strain DSM 244 / SL1) (Ectothiorhodospira halophila (strain DSM 244 / SL1)).